An 82-amino-acid chain; its full sequence is UPF0337 protein PP_2059 (82 aa).

It belongs to the UPF0337 (CsbD) family.

This Pseudomonas putida (strain ATCC 47054 / DSM 6125 / CFBP 8728 / NCIMB 11950 / KT2440) protein is UPF0337 protein PP_2059.